We begin with the raw amino-acid sequence, 125 residues long: Putative zinc finger A20 and AN1 domain-containing stress-associated protein 8 (125 aa).

Residues 2–36 (TGEPSLCIRGCGFFSTSQTKNLCSKCYNDFLKDES) form an A20-type zinc finger. Residues C8, C12, C24, C27, C80, C82, H96, and C98 each coordinate Zn(2+). The segment at 61–106 (LGSKGGCACKKKVGLLGFHCRCGHLFFASHRYPEEHSCPSDYKSAA) adopts an AN1-type; degenerate zinc-finger fold.

Functionally, may be involved in environmental stress response. This Arabidopsis thaliana (Mouse-ear cress) protein is Putative zinc finger A20 and AN1 domain-containing stress-associated protein 8 (SAP8).